The following is a 382-amino-acid chain: Guanylate kinase 1 (382 aa).

The Guanylate kinase-like domain maps to 128–310 (QKPIVISGPS…CYENLKKLLS (183 aa)). 135-142 (GPSGVGKG) lines the ATP pocket. Active-site residues include R168, R261, and R272. The ATP site is built by N295 and D296.

The protein belongs to the guanylate kinase family. Monomer.

The protein localises to the cytoplasm. It localises to the nucleus. It carries out the reaction GMP + ATP = GDP + ADP. Its function is as follows. Essential for recycling GMP and indirectly, cGMP. The protein is Guanylate kinase 1 (GK1) of Oryza sativa subsp. japonica (Rice).